A 1219-amino-acid polypeptide reads, in one-letter code: Pleckstrin homology domain-containing family G member 3 (1219 aa).

Polar residues predominate over residues 1 to 10 (MPVSTSLHQD). Residues 1-66 (MPVSTSLHQD…HLPNSNNNSS (66 aa)) are disordered. The segment covering 18 to 46 (SLTSTTSSSGSSCDSRSAMEEPSSSEAPA) has biased composition (low complexity). Residue Ser76 is modified to Phosphoserine. The DH domain maps to 93–272 (YLGRVVREIV…TCVAWYINDM (180 aa)). The PH domain maps to 296-394 (DLTTYGELVL…WTHHIKRLIL (99 aa)). Polar residues predominate over residues 431-442 (WSSQDEVSTNVR). Disordered stretches follow at residues 431–599 (WSSQ…PSVL) and 613–708 (FSRR…KESA). A Phosphoserine modification is found at Ser433. A compositionally biased stretch (basic and acidic residues) spans 446–463 (RQSEPTKHLLRQLNEKAR). 7 positions are modified to phosphoserine: Ser576, Ser577, Ser618, Ser631, Ser640, Ser643, and Ser647. Residues 630 to 645 (GSPRLVSRSSSVLSLE) are compositionally biased toward low complexity. Residues 696–708 (EPDRSSCKKKESA) are compositionally biased toward basic and acidic residues. Phosphoserine occurs at positions 741, 779, and 827. Disordered regions lie at residues 756–780 (RFNSLPRPDPEPVPPVGSKRQVGSR), 821–840 (MESSGGSPGKGPGQGQANGF), 859–878 (EESATASPESSSPTEGRSPA), 955–1133 (APER…LYVT), and 1146–1207 (VMEK…RVRN). The span at 826 to 836 (GSPGKGPGQGQ) shows a compositional bias: gly residues. Positions 859 to 873 (EESATASPESSSPTE) are enriched in low complexity. 5 positions are modified to phosphoserine: Ser962, Ser1011, Ser1023, Ser1037, and Ser1040. Over residues 1020–1029 (SAVSQRTTSP) the composition is skewed to polar residues. Residues 1049 to 1065 (DVRELCSKYASRDEARR) show a composition bias toward basic and acidic residues. Ser1081 carries the post-translational modification Phosphoserine. The residue at position 1107 (Arg1107) is an Omega-N-methylarginine. Residues 1187-1197 (QPKEEGSRDPA) are compositionally biased toward basic and acidic residues.

The protein localises to the cytoplasm. It is found in the cytoskeleton. Its function is as follows. Plays a role in controlling cell polarity and cell motility by selectively binding newly polymerized actin and activating RAC1 and CDC42 to enhance local actin polymerization. This is Pleckstrin homology domain-containing family G member 3 from Homo sapiens (Human).